The following is a 271-amino-acid chain: Membrane protein insertase YidC 1 (271 aa).

Residues M1–A20 form the signal peptide. C21 carries the N-palmitoyl cysteine lipid modification. C21 carries S-diacylglycerol cysteine lipidation. Transmembrane regions (helical) follow at residues I45–I65, Y124–L144, P163–L183, and V201–W221.

The protein belongs to the OXA1/ALB3/YidC family. Type 2 subfamily.

The protein localises to the cell membrane. Functionally, required for the insertion and/or proper folding and/or complex formation of integral membrane proteins into the membrane. Involved in integration of membrane proteins that insert both dependently and independently of the Sec translocase complex, as well as at least some lipoproteins. The polypeptide is Membrane protein insertase YidC 1 (Streptococcus agalactiae serotype III (strain NEM316)).